A 68-amino-acid chain; its full sequence is Large ribosomal subunit protein uL29 (68 aa).

This sequence belongs to the universal ribosomal protein uL29 family.

This is Large ribosomal subunit protein uL29 from Rhodopseudomonas palustris (strain BisA53).